A 599-amino-acid chain; its full sequence is Aspartate--tRNA(Asp/Asn) ligase (599 aa).

L-aspartate is bound at residue E174. An aspartate region spans residues 198–201; that stretch reads QLFK. R220 contacts L-aspartate. ATP contacts are provided by residues 220 to 222 and Q229; that span reads RDE. H457 is a binding site for L-aspartate. E491 serves as a coordination point for ATP. R498 serves as a coordination point for L-aspartate. ATP is bound at residue 543–546; sequence GLDR.

It belongs to the class-II aminoacyl-tRNA synthetase family. Type 1 subfamily. Homodimer.

The protein resides in the cytoplasm. It carries out the reaction tRNA(Asx) + L-aspartate + ATP = L-aspartyl-tRNA(Asx) + AMP + diphosphate. Its function is as follows. Aspartyl-tRNA synthetase with relaxed tRNA specificity since it is able to aspartylate not only its cognate tRNA(Asp) but also tRNA(Asn). Reaction proceeds in two steps: L-aspartate is first activated by ATP to form Asp-AMP and then transferred to the acceptor end of tRNA(Asp/Asn). The chain is Aspartate--tRNA(Asp/Asn) ligase from Paraburkholderia phytofirmans (strain DSM 17436 / LMG 22146 / PsJN) (Burkholderia phytofirmans).